We begin with the raw amino-acid sequence, 68 residues long: Ribosome modulation factor (68 aa).

Belongs to the ribosome modulation factor family.

The protein localises to the cytoplasm. Functionally, during stationary phase, converts 70S ribosomes to an inactive dimeric form (100S ribosomes). This chain is Ribosome modulation factor, found in Saccharophagus degradans (strain 2-40 / ATCC 43961 / DSM 17024).